The sequence spans 817 residues: U3 small nucleolar RNA-associated protein 13 (817 aa).

WD repeat units follow at residues 59–100 (EDEQ…RSMK), 102–139 (SSPS…ITHS), 142–187 (GHGG…HTLQ), 191–233 (SAVR…KCKL), 238–280 (PVNQ…VLKR), 386–425 (GHED…CKFD), 432–476 (GHSA…ASMD), 489–528 (AHEK…LEAT), 531–572 (NHKR…KTLE), 573–614 (GHTN…KTLD), 616–654 (HNNR…EIEE), and 664–705 (EQEQ…LGES).

As to quaternary structure, interacts with snoRNA U3. Interacts with MPP10. Component of the ribosomal small subunit (SSU) processome composed of at least 40 protein subunits and snoRNA U3.

It localises to the nucleus. The protein resides in the nucleolus. In terms of biological role, involved in nucleolar processing of pre-18S ribosomal RNA. This Saccharomyces cerevisiae (strain ATCC 204508 / S288c) (Baker's yeast) protein is U3 small nucleolar RNA-associated protein 13 (UTP13).